The following is a 330-amino-acid chain: Probable NAD(P)H-dependent D-xylose reductase xyl1 (330 aa).

The Proton donor role is filled by tyrosine 50. A substrate-binding site is contributed by histidine 112. NAD(+) is bound by residues 166 to 167 (SN), 215 to 224 (SSFGPLSFLE), and 271 to 281 (KSNNPTRLAQN).

The protein belongs to the aldo/keto reductase family.

It catalyses the reaction xylitol + NAD(+) = D-xylose + NADH + H(+). The catalysed reaction is xylitol + NADP(+) = D-xylose + NADPH + H(+). It participates in carbohydrate metabolism; D-xylose degradation. Its function is as follows. Catalyzes the initial reaction in the xylose utilization pathway by reducing D-xylose into xylitol. Xylose is a major component of hemicelluloses such as xylan. Most fungi utilize D-xylose via three enzymatic reactions, xylose reductase (XR), xylitol dehydrogenase (XDH), and xylulokinase, to form xylulose 5-phosphate, which enters pentose phosphate pathway. This chain is Probable NAD(P)H-dependent D-xylose reductase xyl1 (xyl1), found in Aspergillus clavatus (strain ATCC 1007 / CBS 513.65 / DSM 816 / NCTC 3887 / NRRL 1 / QM 1276 / 107).